Here is a 331-residue protein sequence, read N- to C-terminus: Glycerophosphodiester phosphodiesterase 1 (331 aa).

Residues 1–3 (MWL) lie on the Cytoplasmic side of the membrane. The helical transmembrane segment at 4 to 24 (WEDQGGLLGPFSFVLVLLLVV) threads the bilayer. Residues 25-248 (TRSPFNACVL…PRYSVFWKQS (224 aa)) lie on the Lumenal side of the membrane. The GP-PDE domain maps to 65–331 (VSAIAHRGGS…SMLEDCAPHF (267 aa)). Mg(2+) contacts are provided by glutamate 97 and aspartate 99. Asparagine 168 carries an N-linked (GlcNAc...) asparagine glycan. A Mg(2+)-binding site is contributed by aspartate 174. The helical transmembrane segment at 249-269 (VFVVLDILLDWSMHNVLWYLC) threads the bilayer. At 270-331 (GISAFLMQKD…SMLEDCAPHF (62 aa)) the chain is on the cytoplasmic side.

It belongs to the glycerophosphoryl diester phosphodiesterase family. Interacts with PRAF2. Interacts with RGS16. It depends on Mg(2+) as a cofactor. In terms of processing, N-glycosylated. Detected in heart, brain, lung, liver, skeletal muscle, kidney, pituitary and testis.

The protein resides in the cell membrane. It is found in the cytoplasmic vesicle membrane. It catalyses the reaction sn-glycero-3-phospho-1D-myo-inositol + H2O = myo-inositol + sn-glycerol 3-phosphate + H(+). The catalysed reaction is 1-O-(1Z-octadecenyl)-sn-glycero-3-phospho-(N-5Z,8Z,11Z,14Z-eicosatetraenoyl)-ethanolamine + H2O = 1-O-(1Z-octadecenyl)-sn-glycero-3-phosphate + N-(5Z,8Z,11Z,14Z-eicosatetraenoyl)-ethanolamine + H(+). The enzyme catalyses 1-O-(1Z-octadecenyl)-sn-glycero-3-phospho-(N-9Z-octadecenoyl)-ethanolamine + H2O = 1-O-(1Z-octadecenyl)-sn-glycero-3-phosphate + N-(9Z-octadecenoyl) ethanolamine + H(+). It carries out the reaction 1-O-(1Z-octadecenyl)-sn-glycero-3-phospho-N-hexadecanoyl-ethanolamine + H2O = 1-O-(1Z-octadecenyl)-sn-glycero-3-phosphate + N-hexadecanoylethanolamine + H(+). It catalyses the reaction N-(4Z,7Z,10Z,13Z,16Z,19Z)-docosahexaenoyl-sn-glycero-3-phosphoethanolamine + H2O = N-(4Z,7Z,10Z,13Z,16Z,19Z)-docosahexaenoyl ethanolamine + sn-glycerol 3-phosphate + H(+). The catalysed reaction is N-eicosanoyl-sn-glycero-3-phosphoethanolamine + H2O = N-eicosanoyl ethanolamine + sn-glycerol 3-phosphate + H(+). The enzyme catalyses N-hexadecanoyl-sn-glycero-3-phosphoethanolamine + H2O = N-hexadecanoylethanolamine + sn-glycerol 3-phosphate + H(+). It carries out the reaction N-(9Z-octadecenoyl)-sn-glycero-3-phosphoethanolamine + H2O = N-(9Z-octadecenoyl) ethanolamine + sn-glycerol 3-phosphate + H(+). It catalyses the reaction N-(5Z,8Z,11Z,14Z-eicosatetraenoyl)-sn-glycero-3-phosphoethanolamine + H2O = N-(5Z,8Z,11Z,14Z-eicosatetraenoyl)-ethanolamine + sn-glycerol 3-phosphate + H(+). Its activity is regulated as follows. Inhibited by EDTA, calcium chloride, and zinc chloride. Enhanced by magnesium chloride. Glycerophosphodiester phosphodiesterase activity can be modulated by G-protein signaling pathways. Hydrolyzes the phosphodiester bond of glycerophosphodiesters such as glycerophosphoinositol (GroPIns) and glycerophosphoethanolamine (GroPEth), to yield a glycerol phosphate and an alcohol. Hydrolyzes glycerophospho-N-acylethanolamines to N-acylethanolamines in the brain and participates in bioactive N-acylethanolamine biosynthesis such as anandamide (an endocannabinoid), N-palmitoylethanolamine (an anti-inflammatory), and N-oleoylethanolamine (an anorexic). In addition, has a lysophospholipase D activity by hydrolyzing N-acyl-lysoplasmenylethanolamine (N-acyl-lysoPlsEt) to N-acylethanolamine. However lysophospholipase D activity is lower than glycerophosphodiester phosphodiesterase activity. Has little or no activity towards glycerophosphocholine. The sequence is that of Glycerophosphodiester phosphodiesterase 1 from Rattus norvegicus (Rat).